We begin with the raw amino-acid sequence, 166 residues long: UPF0336 protein MT0525.1 (166 aa).

The MaoC-like domain occupies Gln-8–Thr-131.

This sequence belongs to the UPF0336 family.

The protein is UPF0336 protein MT0525.1 of Mycobacterium tuberculosis (strain CDC 1551 / Oshkosh).